The chain runs to 200 residues: Large ribosomal subunit protein uL4 (200 aa).

The segment at 38 to 72 (GRQGTKQQKTRSDVAGGGKRPWRQKGTGRARAGTT) is disordered.

It belongs to the universal ribosomal protein uL4 family. As to quaternary structure, part of the 50S ribosomal subunit.

One of the primary rRNA binding proteins, this protein initially binds near the 5'-end of the 23S rRNA. It is important during the early stages of 50S assembly. It makes multiple contacts with different domains of the 23S rRNA in the assembled 50S subunit and ribosome. Its function is as follows. Forms part of the polypeptide exit tunnel. This is Large ribosomal subunit protein uL4 from Pseudomonas putida (strain ATCC 700007 / DSM 6899 / JCM 31910 / BCRC 17059 / LMG 24140 / F1).